The chain runs to 75 residues: Small, acid-soluble spore protein Tlp (75 aa).

The protein belongs to the Tlp family.

It is found in the spore core. The protein is Small, acid-soluble spore protein Tlp of Geobacillus thermodenitrificans (strain NG80-2).